The following is a 339-amino-acid chain: Anthranilate phosphoribosyltransferase (339 aa).

5-phospho-alpha-D-ribose 1-diphosphate contacts are provided by residues Gly-79, 82 to 83, Ser-87, 89 to 92, 107 to 115, and Ser-119; these read GD, NIST, and KHGNRSVSS. Residue Gly-79 participates in anthranilate binding. Ser-91 provides a ligand contact to Mg(2+). Residue Asn-110 participates in anthranilate binding. Arg-165 serves as a coordination point for anthranilate. Mg(2+) is bound by residues Asp-224 and Glu-225.

Belongs to the anthranilate phosphoribosyltransferase family. Homodimer. Mg(2+) serves as cofactor.

It carries out the reaction N-(5-phospho-beta-D-ribosyl)anthranilate + diphosphate = 5-phospho-alpha-D-ribose 1-diphosphate + anthranilate. It participates in amino-acid biosynthesis; L-tryptophan biosynthesis; L-tryptophan from chorismate: step 2/5. Catalyzes the transfer of the phosphoribosyl group of 5-phosphorylribose-1-pyrophosphate (PRPP) to anthranilate to yield N-(5'-phosphoribosyl)-anthranilate (PRA). This is Anthranilate phosphoribosyltransferase from Exiguobacterium sibiricum (strain DSM 17290 / CCUG 55495 / CIP 109462 / JCM 13490 / 255-15).